The following is a 90-amino-acid chain: Secretoglobin family 1D member 2 (90 aa).

Residues 1–21 form the signal peptide; that stretch reads MKLSVCLLLVTLALCCYQANA.

The protein belongs to the secretoglobin family. Lipophilin subfamily. As to expression, highest expression was found in skeletal muscle. Expressed as well in thymus, trachea, kidney, steroid responsive tissues (prostate, testis, uterus, breast and ovary) and salivary gland.

The protein resides in the secreted. Its function is as follows. May bind androgens and other steroids, may also bind estramustine, a chemotherapeutic agent used for prostate cancer. May be under transcriptional regulation of steroid hormones. The polypeptide is Secretoglobin family 1D member 2 (SCGB1D2) (Homo sapiens (Human)).